Consider the following 119-residue polypeptide: Ribosome-binding factor A (119 aa).

This sequence belongs to the RbfA family. In terms of assembly, monomer. Binds 30S ribosomal subunits, but not 50S ribosomal subunits or 70S ribosomes.

It is found in the cytoplasm. In terms of biological role, one of several proteins that assist in the late maturation steps of the functional core of the 30S ribosomal subunit. Associates with free 30S ribosomal subunits (but not with 30S subunits that are part of 70S ribosomes or polysomes). Required for efficient processing of 16S rRNA. May interact with the 5'-terminal helix region of 16S rRNA. This chain is Ribosome-binding factor A, found in Wolinella succinogenes (strain ATCC 29543 / DSM 1740 / CCUG 13145 / JCM 31913 / LMG 7466 / NCTC 11488 / FDC 602W) (Vibrio succinogenes).